Reading from the N-terminus, the 171-residue chain is 16S rRNA aminocarboxypropyltransferase (171 aa).

Residues T17, L67, L90, and T109 each contribute to the S-adenosyl-L-methionine site.

This sequence belongs to the TDD superfamily. TSR3 family.

Its subcellular location is the cytoplasm. The catalysed reaction is an N(1)-methylpseudouridine in rRNA + S-adenosyl-L-methionine = N(1)-methyl-N(3)-[(3S)-3-amino-3-carboxypropyl]pseudouridine in rRNA + S-methyl-5'-thioadenosine + H(+). Functionally, aminocarboxypropyltransferase that catalyzes the aminocarboxypropyl transfer on pseudouridine corresponding to position 914 in M.jannaschii 16S rRNA. It constitutes the last step in biosynthesis of the hypermodified N1-methyl-N3-(3-amino-3-carboxypropyl) pseudouridine (m1acp3-Psi). The chain is 16S rRNA aminocarboxypropyltransferase from Methanobrevibacter smithii (strain ATCC 35061 / DSM 861 / OCM 144 / PS).